Consider the following 176-residue polypeptide: Tubulin polymerization-promoting protein family member 3 (176 aa).

Residues 132–151 are disordered; that stretch reads TGSHKERFDQTGKGKGKSGR. Basic and acidic residues predominate over residues 134–151; sequence SHKERFDQTGKGKGKSGR.

The protein belongs to the TPPP family.

Its subcellular location is the cytoplasm. It localises to the cytoskeleton. In terms of biological role, regulator of microtubule dynamic that has microtubule bundling activity. This Xenopus laevis (African clawed frog) protein is Tubulin polymerization-promoting protein family member 3 (tppp3).